We begin with the raw amino-acid sequence, 102 residues long: Bowman-Birk type wound-induced proteinase inhibitor WIP1 (102 aa).

The first 15 residues, 1 to 15, serve as a signal peptide directing secretion; sequence MKSSPHLVLILCLQA. 5 disulfides stabilise this stretch: C46–C102, C47–C60, C50–C98, C67–C74, and C71–C90.

It belongs to the Bowman-Birk serine protease inhibitor family.

This chain is Bowman-Birk type wound-induced proteinase inhibitor WIP1 (WIP1), found in Zea mays (Maize).